A 334-amino-acid polypeptide reads, in one-letter code: Cathepsin J (334 aa).

The signal sequence occupies residues 1 to 17 (MTPAVFLVILCFGVASG). A propeptide spans 18–113 (APARDPNLDA…PSAQKQVSIG (96 aa)) (activation peptide). Residue Cys-138 is part of the active site. 3 N-linked (GlcNAc...) asparagine glycosylation sites follow: Asn-217, Asn-221, and Asn-268. A disulfide bridge links Cys-269 with Cys-322. His-276 is an active-site residue. Asn-288 carries N-linked (GlcNAc...) asparagine glycosylation. Asn-300 is an active-site residue.

It belongs to the peptidase C1 family. Expressed specifically in placenta.

It is found in the lysosome. This is Cathepsin J (Ctsj) from Rattus norvegicus (Rat).